The following is a 266-amino-acid chain: Putative pyruvate, phosphate dikinase regulatory protein (266 aa).

An ADP-binding site is contributed by 149–156; it reads GVSRTSKT.

The protein belongs to the pyruvate, phosphate/water dikinase regulatory protein family. PDRP subfamily.

The enzyme catalyses N(tele)-phospho-L-histidyl/L-threonyl-[pyruvate, phosphate dikinase] + ADP = N(tele)-phospho-L-histidyl/O-phospho-L-threonyl-[pyruvate, phosphate dikinase] + AMP + H(+). It carries out the reaction N(tele)-phospho-L-histidyl/O-phospho-L-threonyl-[pyruvate, phosphate dikinase] + phosphate + H(+) = N(tele)-phospho-L-histidyl/L-threonyl-[pyruvate, phosphate dikinase] + diphosphate. In terms of biological role, bifunctional serine/threonine kinase and phosphorylase involved in the regulation of the pyruvate, phosphate dikinase (PPDK) by catalyzing its phosphorylation/dephosphorylation. This is Putative pyruvate, phosphate dikinase regulatory protein from Geobacillus kaustophilus (strain HTA426).